A 150-amino-acid chain; its full sequence is Endoribonuclease YbeY (150 aa).

Zn(2+) contacts are provided by His112, His116, and His122.

It belongs to the endoribonuclease YbeY family. Requires Zn(2+) as cofactor.

Its subcellular location is the cytoplasm. Its function is as follows. Single strand-specific metallo-endoribonuclease involved in late-stage 70S ribosome quality control and in maturation of the 3' terminus of the 16S rRNA. This chain is Endoribonuclease YbeY, found in Geobacter metallireducens (strain ATCC 53774 / DSM 7210 / GS-15).